A 390-amino-acid polypeptide reads, in one-letter code: GTPase Obg (390 aa).

Residues 1–159 (MKFVDEASIL…RDLLLELMLL (159 aa)) enclose the Obg domain. Positions 127–147 (NTRFKSSVNRTPRQKTNGTPG) are disordered. Polar residues predominate over residues 129 to 145 (RFKSSVNRTPRQKTNGT). In terms of domain architecture, OBG-type G spans 160 to 333 (ADVGMLGMPN…LCWDVMTFII (174 aa)). GTP-binding positions include 166–173 (GMPNAGKS), 191–195 (FTTLV), 213–216 (DIPG), 283–286 (NKID), and 314–316 (SAA). Residues Ser173 and Thr193 each coordinate Mg(2+).

Belongs to the TRAFAC class OBG-HflX-like GTPase superfamily. OBG GTPase family. Monomer. The cofactor is Mg(2+).

Its subcellular location is the cytoplasm. Its function is as follows. An essential GTPase which binds GTP, GDP and possibly (p)ppGpp with moderate affinity, with high nucleotide exchange rates and a fairly low GTP hydrolysis rate. Plays a role in control of the cell cycle, stress response, ribosome biogenesis and in those bacteria that undergo differentiation, in morphogenesis control. The polypeptide is GTPase Obg (Salmonella gallinarum (strain 287/91 / NCTC 13346)).